The chain runs to 393 residues: S-adenosylmethionine synthase 1 (393 aa).

Glu-9 serves as a coordination point for Mg(2+). His-15 is a binding site for ATP. Glu-43 is a K(+) binding site. Positions 56 and 99 each coordinate L-methionine. ATP contacts are provided by residues 167–169 (DGK), 235–238 (SGRF), Asp-246, 252–253 (RK), Ala-269, Lys-273, and Lys-277. Asp-246 contacts L-methionine. An L-methionine-binding site is contributed by Lys-277.

Belongs to the AdoMet synthase family. Homotetramer. It depends on Mn(2+) as a cofactor. Requires Mg(2+) as cofactor. The cofactor is Co(2+). K(+) serves as cofactor. Mostly expressed in stems.

Its subcellular location is the cytoplasm. The enzyme catalyses L-methionine + ATP + H2O = S-adenosyl-L-methionine + phosphate + diphosphate. It functions in the pathway amino-acid biosynthesis; S-adenosyl-L-methionine biosynthesis; S-adenosyl-L-methionine from L-methionine: step 1/1. In terms of biological role, catalyzes the formation of S-adenosylmethionine from methionine and ATP. The reaction comprises two steps that are both catalyzed by the same enzyme: formation of S-adenosylmethionine (AdoMet) and triphosphate, and subsequent hydrolysis of the triphosphate. The polypeptide is S-adenosylmethionine synthase 1 (SAM1) (Solanum lycopersicum (Tomato)).